Consider the following 410-residue polypeptide: MGLKHFLEKIEPHFLPGGKHEKWYALYEAAATIFYTSGAVTRKAAHVRDALDSKRMMILVWLALFPAMFYGMYNVGAQAFGALTPDLLQQNIANDWHYAFANALGINMSSEAGVSDKMLFGAIYFLPIYATVFVVGGFWEVLFATVRKHEINEGFFVTSILFALIVPPTLPLWQAALGISFGVVVAKEVFGGTGKNFMNPALAGRAFLFFAYPANLSGDAVWTAVDGYSGATALAQWAAHGADGLKNAVTGQTITWMDAFIGKLPGSIGEVSTLALLIGGAFIVFARIASWRIIAGVMIGMIAMSSLFNFIGSDTNAMFAMPWYWHLVVGGFAIGMLFMATDPVSASFTNVGKWWYGALIGVMCVLIRVVNPAYPEGMMLAILFANLFAPIFDYFVAQANIKRRKARSNG.

Transmembrane regions (helical) follow at residues 56-76 (MMIL…YNVG), 119-139 (LFGA…GGFW), and 159-179 (SILF…ALGI). Threonine 232 carries the post-translational modification FMN phosphoryl threonine. 5 consecutive transmembrane segments (helical) span residues 266-286 (GSIG…IVFA), 293-313 (IIAG…FIGS), 318-338 (MFAM…GMLF), 347-367 (SFTN…CVLI), and 377-397 (GMML…YFVA).

This sequence belongs to the NqrB/RnfD family. As to quaternary structure, composed of six subunits; NqrA, NqrB, NqrC, NqrD, NqrE and NqrF. It depends on FMN as a cofactor.

The protein resides in the cell inner membrane. The catalysed reaction is a ubiquinone + n Na(+)(in) + NADH + H(+) = a ubiquinol + n Na(+)(out) + NAD(+). NQR complex catalyzes the reduction of ubiquinone-1 to ubiquinol by two successive reactions, coupled with the transport of Na(+) ions from the cytoplasm to the periplasm. NqrA to NqrE are probably involved in the second step, the conversion of ubisemiquinone to ubiquinol. This chain is Na(+)-translocating NADH-quinone reductase subunit B, found in Neisseria meningitidis serogroup B (strain ATCC BAA-335 / MC58).